The primary structure comprises 120 residues: Chaperonin GroEL (120 aa).

23–27 (DGTTT) contributes to the ATP binding site.

It belongs to the chaperonin (HSP60) family. As to quaternary structure, forms a cylinder of 14 subunits composed of two heptameric rings stacked back-to-back. Interacts with the co-chaperonin GroES.

The protein localises to the cytoplasm. The enzyme catalyses ATP + H2O + a folded polypeptide = ADP + phosphate + an unfolded polypeptide.. Functionally, together with its co-chaperonin GroES, plays an essential role in assisting protein folding. The GroEL-GroES system forms a nano-cage that allows encapsulation of the non-native substrate proteins and provides a physical environment optimized to promote and accelerate protein folding. This chain is Chaperonin GroEL, found in Mycobacterium intracellulare.